The sequence spans 277 residues: MGIKFTKMHGLGNDFIVLDGVNQSIQLTVEQIQKLANRHTGIGFDQCLLIESSQTEGIDFNYRIFNADGQEVGQCGNGARCIALFARYYGLTAKNKLTVATKTTLMDLIINEDNSVSVNMGVPRLAPGEIPLLADRQSPEYSLKLNNGNTVNLHAISVGNPHAVLLVENIDTAPVNSLGQQISFHPQFPEQVNVGFMQIVNHEKINLRVYERGCGETIACGSGAVAAAAIARLFYNLSDKITVHLPGGDLCIQWPCPTAPIILTGPAAFVYEGTLLS.

Asn-13, Gln-46, and Asn-66 together coordinate substrate. The active-site Proton donor is Cys-75. Residues 76-77, Asn-160, Asn-193, and 211-212 each bind substrate; these read GN and ER. Cys-220 functions as the Proton acceptor in the catalytic mechanism. 221-222 contributes to the substrate binding site; that stretch reads GS.

The protein belongs to the diaminopimelate epimerase family. In terms of assembly, homodimer.

It localises to the cytoplasm. It catalyses the reaction (2S,6S)-2,6-diaminopimelate = meso-2,6-diaminopimelate. The protein operates within amino-acid biosynthesis; L-lysine biosynthesis via DAP pathway; DL-2,6-diaminopimelate from LL-2,6-diaminopimelate: step 1/1. Its function is as follows. Catalyzes the stereoinversion of LL-2,6-diaminopimelate (L,L-DAP) to meso-diaminopimelate (meso-DAP), a precursor of L-lysine and an essential component of the bacterial peptidoglycan. The sequence is that of Diaminopimelate epimerase from Legionella pneumophila (strain Lens).